The following is a 566-amino-acid chain: Phenylalanine--tRNA ligase beta subunit (566 aa).

The B5 domain occupies 287-362; it reads YFQEEVEFNV…IGEGLSSFNP (76 aa). Mg(2+)-binding residues include D340, D346, E349, and D350.

This sequence belongs to the phenylalanyl-tRNA synthetase beta subunit family. Type 2 subfamily. In terms of assembly, tetramer of two alpha and two beta subunits. The cofactor is Mg(2+).

It localises to the cytoplasm. The enzyme catalyses tRNA(Phe) + L-phenylalanine + ATP = L-phenylalanyl-tRNA(Phe) + AMP + diphosphate + H(+). The chain is Phenylalanine--tRNA ligase beta subunit from Borreliella burgdorferi (strain ATCC 35210 / DSM 4680 / CIP 102532 / B31) (Borrelia burgdorferi).